We begin with the raw amino-acid sequence, 1070 residues long: Phosphatidylinositol 4,5-bisphosphate 3-kinase catalytic subunit beta isoform (1070 aa).

Residues 26-115 form the PI3K-ABD domain; the sequence is SDGSIPVDFL…LPVLKLVTRS (90 aa). A PI3K-RBD domain is found at 194–285; the sequence is GGKLIVAVHF…RALPHFILVE (92 aa). Position 324 is a phosphoserine (Ser324). The region spanning 327 to 496 is the C2 PI3K-type domain; that stretch reads WENNNPFQIV…NATALHVKFP (170 aa). Residues 410 to 418 carry the Nuclear localization signal motif; the sequence is KVKTKKSTK. The PIK helical domain maps to 524–701; it reads ANVSSRGGKK…GVILEAYCRG (178 aa). The PI3K/PI4K catalytic domain maps to 772–1053; the sequence is YVEKCKYMDS…KFDEALRESW (282 aa). The tract at residues 778–784 is G-loop; it reads YMDSKMK. The catalytic loop stretch occupies residues 916-924; that stretch reads GIGDRHSDN. Residues 935–961 are activation loop; that stretch reads HIDFGHILGNFKSKFGIKRERVPFILT. Ser1070 carries the phosphoserine; by autocatalysis modification.

Belongs to the PI3/PI4-kinase family. Heterodimer of a catalytic subunit PIK3CB and a p85 regulatory subunit (PIK3R1, PIK3R2 or PIK3R3). Interaction with PIK3R2 is required for nuclear localization and nuclear export. Part of a complex with PIK3R1 and PTEN. Binding to PTEN may antagonize the lipid kinase activity under normal growth conditions. Part of a complex involved in autophagosome formation composed of PIK3C3 and PIK3R4. Interacts with BECN1, ATG14 and RAB5A. Post-translationally, autophosphorylation at Ser-1070 negatively regulates the phosphatidylinositol-4,5-bisphosphate 3-kinase activity. As to expression, expressed ubiquitously.

The protein localises to the cytoplasm. It localises to the nucleus. The catalysed reaction is a 1,2-diacyl-sn-glycero-3-phospho-(1D-myo-inositol-4,5-bisphosphate) + ATP = a 1,2-diacyl-sn-glycero-3-phospho-(1D-myo-inositol-3,4,5-trisphosphate) + ADP + H(+). It carries out the reaction 1-octadecanoyl-2-(5Z,8Z,11Z,14Z)-eicosatetraenoyl-sn-glycero-3-phospho-1D-myo-inositol 4,5-bisphosphate + ATP = 1-octadecanoyl-2-(5Z,8Z,11Z,14Z-eicosatetraenoyl)-sn-glycero-3-phospho-(1D-myo-inositol 3,4,5-triphosphate) + ADP + H(+). It catalyses the reaction L-seryl-[protein] + ATP = O-phospho-L-seryl-[protein] + ADP + H(+). It functions in the pathway phospholipid metabolism; phosphatidylinositol phosphate biosynthesis. Functionally, phosphoinositide-3-kinase (PI3K) phosphorylates phosphatidylinositol derivatives at position 3 of the inositol ring to produce 3-phosphoinositides. Uses ATP and PtdIns(4,5)P2 (phosphatidylinositol 4,5-bisphosphate) to generate phosphatidylinositol 3,4,5-trisphosphate (PIP3). PIP3 plays a key role by recruiting PH domain-containing proteins to the membrane, including AKT1 and PDPK1, activating signaling cascades involved in cell growth, survival, proliferation, motility and morphology. Involved in the activation of AKT1 upon stimulation by G-protein coupled receptors (GPCRs) ligands such as CXCL12, sphingosine 1-phosphate, and lysophosphatidic acid. May also act downstream receptor tyrosine kinases. Required in different signaling pathways for stable platelet adhesion and aggregation. Plays a role in platelet activation signaling triggered by GPCRs, alpha-IIb/beta-3 integrins (ITGA2B/ ITGB3) and ITAM (immunoreceptor tyrosine-based activation motif)-bearing receptors such as GP6. Regulates the strength of adhesion of ITGA2B/ ITGB3 activated receptors necessary for the cellular transmission of contractile forces. Required for platelet aggregation induced by F2 (thrombin) and thromboxane A2 (TXA2). Has a role in cell survival. May have a role in cell migration. Involved in the early stage of autophagosome formation. Modulates the intracellular level of PtdIns3P (phosphatidylinositol 3-phosphate) and activates PIK3C3 kinase activity. May act as a scaffold, independently of its lipid kinase activity to positively regulate autophagy. May have a role in insulin signaling as scaffolding protein in which the lipid kinase activity is not required. May have a kinase-independent function in regulating cell proliferation and in clathrin-mediated endocytosis. Mediator of oncogenic signal in cell lines lacking PTEN. The lipid kinase activity is necessary for its role in oncogenic transformation. Required for the growth of ERBB2 and RAS driven tumors. Also has a protein kinase activity showing autophosphorylation. The protein is Phosphatidylinositol 4,5-bisphosphate 3-kinase catalytic subunit beta isoform (PIK3CB) of Homo sapiens (Human).